A 242-amino-acid polypeptide reads, in one-letter code: N-glycosylase/DNA lyase (242 aa).

8-oxoguanine contacts are provided by Gln26, Ser53, and Trp64. Residues 120 to 184 (EGYYKNMKML…EDLRIKSVTS (65 aa)) are helix-hairpin-helix. The active-site Schiff-base intermediate with DNA is the Lys144. Residues Phe148 and Pro174 each coordinate 8-oxoguanine. The active site involves Asp176. Residues Asp210 and Trp214 each contribute to the 8-oxoguanine site.

The protein belongs to the archaeal N-glycosylase/DNA lyase (AGOG) family.

The enzyme catalyses 2'-deoxyribonucleotide-(2'-deoxyribose 5'-phosphate)-2'-deoxyribonucleotide-DNA = a 3'-end 2'-deoxyribonucleotide-(2,3-dehydro-2,3-deoxyribose 5'-phosphate)-DNA + a 5'-end 5'-phospho-2'-deoxyribonucleoside-DNA + H(+). In terms of biological role, DNA repair enzyme that is part of the base excision repair (BER) pathway; protects from oxidative damage by removing the major product of DNA oxidation, 8-oxoguanine (GO), from single- and double-stranded DNA substrates. This is N-glycosylase/DNA lyase from Pyrococcus furiosus (strain ATCC 43587 / DSM 3638 / JCM 8422 / Vc1).